The chain runs to 414 residues: D-mannose isomerase (414 aa).

Residues histidine 255 and histidine 390 each act as proton donor/acceptor in the active site.

The protein belongs to the N-acylglucosamine 2-epimerase family. Monomer.

It catalyses the reaction D-mannose = D-fructose. Strongly inhibited by Ag(2+), Cu(2+) and cetyltrimethyl ammonium bromide (CTAB). Functionally, catalyzes the reversible isomerization of D-mannose to D-fructose. Shows high specific activity towards mannose and fructose, and has no detectable activity towards other monosaccharides and disaccharides. The sequence is that of D-mannose isomerase from Pseudomonas cannabina pv. alisalensis.